The primary structure comprises 247 residues: Uridylate kinase (247 aa).

16 to 19 is an ATP binding site; sequence KLSG. A UMP-binding site is contributed by G58. The ATP site is built by G59 and R63. UMP is bound by residues D78 and 139-146; that span reads TGNPFFTT. ATP is bound by residues T166, Y172, and D175.

The protein belongs to the UMP kinase family. As to quaternary structure, homohexamer.

It localises to the cytoplasm. The catalysed reaction is UMP + ATP = UDP + ADP. The protein operates within pyrimidine metabolism; CTP biosynthesis via de novo pathway; UDP from UMP (UMPK route): step 1/1. Its activity is regulated as follows. Inhibited by UTP. Functionally, catalyzes the reversible phosphorylation of UMP to UDP. The polypeptide is Uridylate kinase (Xylella fastidiosa (strain Temecula1 / ATCC 700964)).